An 865-amino-acid polypeptide reads, in one-letter code: Alanine--tRNA ligase (865 aa).

Positions 568, 572, 670, and 674 each coordinate Zn(2+).

Belongs to the class-II aminoacyl-tRNA synthetase family. Requires Zn(2+) as cofactor.

It is found in the cytoplasm. The catalysed reaction is tRNA(Ala) + L-alanine + ATP = L-alanyl-tRNA(Ala) + AMP + diphosphate. Its function is as follows. Catalyzes the attachment of alanine to tRNA(Ala) in a two-step reaction: alanine is first activated by ATP to form Ala-AMP and then transferred to the acceptor end of tRNA(Ala). Also edits incorrectly charged Ser-tRNA(Ala) and Gly-tRNA(Ala) via its editing domain. This chain is Alanine--tRNA ligase, found in Vibrio campbellii (strain ATCC BAA-1116).